A 292-amino-acid chain; its full sequence is GTP cyclohydrolase FolE2 (292 aa).

This sequence belongs to the GTP cyclohydrolase IV family.

It carries out the reaction GTP + H2O = 7,8-dihydroneopterin 3'-triphosphate + formate + H(+). It functions in the pathway cofactor biosynthesis; 7,8-dihydroneopterin triphosphate biosynthesis; 7,8-dihydroneopterin triphosphate from GTP: step 1/1. Its function is as follows. Converts GTP to 7,8-dihydroneopterin triphosphate. The chain is GTP cyclohydrolase FolE2 from Staphylococcus aureus (strain MRSA252).